Here is a 154-residue protein sequence, read N- to C-terminus: MGLSDQEWQQVLTIWGKVEADIAGHGHEVLMRLFHDHPETLDRFDKFKGLKTPDQMKGSEDLKKHGATVLTQLGKILKQKGNHESELKPLAQTHATKHKIPVKYLEFISEVIIKVIAEKHAADFGADSQAAMKKALELFRNDMASKYKEFGFQG.

The Globin domain maps to 2–148; sequence GLSDQEWQQV…FRNDMASKYK (147 aa). Position 65 (H65) interacts with nitrite. H65 lines the O2 pocket. H94 serves as a coordination point for heme b.

It belongs to the globin family. As to quaternary structure, monomeric.

It is found in the cytoplasm. The protein localises to the sarcoplasm. The catalysed reaction is Fe(III)-heme b-[protein] + nitric oxide + H2O = Fe(II)-heme b-[protein] + nitrite + 2 H(+). It catalyses the reaction H2O2 + AH2 = A + 2 H2O. Its function is as follows. Monomeric heme protein which primary function is to store oxygen and facilitate its diffusion within muscle tissues. Reversibly binds oxygen through a pentacoordinated heme iron and enables its timely and efficient release as needed during periods of heightened demand. Depending on the oxidative conditions of tissues and cells, and in addition to its ability to bind oxygen, it also has a nitrite reductase activity whereby it regulates the production of bioactive nitric oxide. Under stress conditions, like hypoxia and anoxia, it also protects cells against reactive oxygen species thanks to its pseudoperoxidase activity. In Gallus gallus (Chicken), this protein is Myoglobin (MB).